The sequence spans 538 residues: Sucrose transport protein SUT1 (538 aa).

The Cytoplasmic segment spans residues 1–52; it reads MARGSGAGGGGGGGGGGLELSVGVGGGGGARGGGGGEAAAAVETAAPISLGR. Residues 53–73 form a helical membrane-spanning segment; that stretch reads LILSGMVAGGVQYGWALQLSL. At 74-81 the chain is on the extracellular side; the sequence is LTPYVQTL. Residues 82-102 form a helical membrane-spanning segment; that stretch reads GLSHALTSFMWLCGPIAGMVV. Over 103 to 123 the chain is Cytoplasmic; it reads QPCVGLYSDRCTSKWGRRRPY. A helical membrane pass occupies residues 124–144; it reads ILTGCVLICLAVVVIGFSADI. The Extracellular portion of the chain corresponds to 145–162; that stretch reads GYAMGDTKEDCSVYHGSR. Residues 163 to 183 form a helical membrane-spanning segment; the sequence is WHAAIVYVLGFWLLDFSNNTV. The Cytoplasmic portion of the chain corresponds to 184-198; it reads QGPARALMADLSGRH. The chain crosses the membrane as a helical span at residues 199-219; sequence GPGTANSIFCSWMAMGNILGY. The Extracellular portion of the chain corresponds to 220-247; it reads SSGSTNNWHKWFPFLKTRACCEACANLK. Residues 248 to 268 form a helical membrane-spanning segment; that stretch reads GAFLVAVIFLSLCLVITLIFA. Topologically, residues 269–306 are cytoplasmic; sequence KEVPFKGNAALPTKSNEPAEPEGTGPLAVLKGFRNLPT. The chain crosses the membrane as a helical span at residues 307–327; sequence GMPSVLIVTGLTWLSWFPFIL. Residues 328 to 357 lie on the Extracellular side of the membrane; it reads YDTDWMGREIYHGDPKGTDPQIEAFNQGVR. Residues 358 to 378 form a helical membrane-spanning segment; it reads AGAFGLLLNSIVLGFSSFLIE. The Cytoplasmic portion of the chain corresponds to 379 to 388; that stretch reads PMCRKVGPRV. A helical membrane pass occupies residues 389 to 409; the sequence is VWVTSNFLVCIAMAATALISF. Residues 410–433 are Extracellular-facing; that stretch reads WSLKDFHGTVQKAITADKSIKAVC. The chain crosses the membrane as a helical span at residues 434 to 454; the sequence is LVLFAFLGVPLAVLYSVPFAV. Over 455 to 470 the chain is Cytoplasmic; sequence TAQLAATRGGGQGLCT. The chain crosses the membrane as a helical span at residues 471 to 491; it reads GVLNISIVIPQVVIALGAGPW. Residues 492–499 lie on the Extracellular side of the membrane; that stretch reads DELFGKGN. A helical transmembrane segment spans residues 500 to 520; sequence IPAFGLASGFALIGGVAGIFL. Residues 521–538 lie on the Cytoplasmic side of the membrane; it reads LPKISKRQFRSVSMGGGH.

This sequence belongs to the glycoside-pentoside-hexuronide (GPH) cation symporter transporter (TC 2.A.2.4) family. In terms of assembly, homodimer.

The protein resides in the cell membrane. It participates in glycan biosynthesis; sucrose metabolism. Responsible for the transport of sucrose into the cell, with the concomitant uptake of protons (symport system). May also transport other glucosides. May be required for apoplastic phloem sucrose loading in source tissues (e.g. leaves) in order to transport it to sink tissues (e.g. roots, flowers). In Oryza sativa subsp. indica (Rice), this protein is Sucrose transport protein SUT1 (SUT1).